A 441-amino-acid chain; its full sequence is Glutamyl-tRNA reductase (441 aa).

Substrate-binding positions include 49 to 52, serine 110, 115 to 117, and glutamine 121; these read TCNR and EPQ. The active-site Nucleophile is cysteine 50. 190–195 contributes to the NADP(+) binding site; sequence GAGEMA.

It belongs to the glutamyl-tRNA reductase family. As to quaternary structure, homodimer.

The enzyme catalyses (S)-4-amino-5-oxopentanoate + tRNA(Glu) + NADP(+) = L-glutamyl-tRNA(Glu) + NADPH + H(+). The protein operates within porphyrin-containing compound metabolism; protoporphyrin-IX biosynthesis; 5-aminolevulinate from L-glutamyl-tRNA(Glu): step 1/2. Catalyzes the NADPH-dependent reduction of glutamyl-tRNA(Glu) to glutamate 1-semialdehyde (GSA). The protein is Glutamyl-tRNA reductase of Sulfurihydrogenibium sp. (strain YO3AOP1).